The chain runs to 309 residues: Homoserine O-succinyltransferase (309 aa).

The active-site Acyl-thioester intermediate is Cys-142. 2 residues coordinate substrate: Lys-163 and Ser-192. The active-site Proton acceptor is His-235. The active site involves Glu-237. Arg-249 is a substrate binding site.

Belongs to the MetA family. Homodimer.

The protein localises to the cytoplasm. The enzyme catalyses L-homoserine + succinyl-CoA = O-succinyl-L-homoserine + CoA. It participates in amino-acid biosynthesis; L-methionine biosynthesis via de novo pathway; O-succinyl-L-homoserine from L-homoserine: step 1/1. In terms of biological role, transfers a succinyl group from succinyl-CoA to L-homoserine, forming succinyl-L-homoserine. The protein is Homoserine O-succinyltransferase of Escherichia coli (strain SE11).